The chain runs to 375 residues: 23S rRNA (uracil(747)-C(5))-methyltransferase RlmC (375 aa).

The [4Fe-4S] cluster site is built by Cys-3, Cys-11, Cys-14, and Cys-87. Residues Gln-212, Phe-241, Glu-262, and Asn-307 each contribute to the S-adenosyl-L-methionine site. Catalysis depends on Cys-334, which acts as the Nucleophile.

It belongs to the class I-like SAM-binding methyltransferase superfamily. RNA M5U methyltransferase family. RlmC subfamily.

The enzyme catalyses uridine(747) in 23S rRNA + S-adenosyl-L-methionine = 5-methyluridine(747) in 23S rRNA + S-adenosyl-L-homocysteine + H(+). Functionally, catalyzes the formation of 5-methyl-uridine at position 747 (m5U747) in 23S rRNA. This Salmonella enteritidis PT4 (strain P125109) protein is 23S rRNA (uracil(747)-C(5))-methyltransferase RlmC.